We begin with the raw amino-acid sequence, 194 residues long: dTTP/UTP pyrophosphatase (194 aa).

Catalysis depends on aspartate 66, which acts as the Proton acceptor.

This sequence belongs to the Maf family. YhdE subfamily. Requires a divalent metal cation as cofactor.

The protein resides in the cytoplasm. The catalysed reaction is dTTP + H2O = dTMP + diphosphate + H(+). The enzyme catalyses UTP + H2O = UMP + diphosphate + H(+). Its function is as follows. Nucleoside triphosphate pyrophosphatase that hydrolyzes dTTP and UTP. May have a dual role in cell division arrest and in preventing the incorporation of modified nucleotides into cellular nucleic acids. In Anaeromyxobacter dehalogenans (strain 2CP-1 / ATCC BAA-258), this protein is dTTP/UTP pyrophosphatase.